Reading from the N-terminus, the 190-residue chain is UPF0200 protein TGAM_0868 (190 aa).

7 to 14 (GMPGSGKS) is a binding site for ATP.

The protein belongs to the UPF0200 family.

The chain is UPF0200 protein TGAM_0868 from Thermococcus gammatolerans (strain DSM 15229 / JCM 11827 / EJ3).